A 392-amino-acid polypeptide reads, in one-letter code: 4-hydroxy-3-methylbut-2-en-1-yl diphosphate synthase (flavodoxin) (392 aa).

[4Fe-4S] cluster is bound by residues C280, C283, C315, and E322. A compositionally biased stretch (basic and acidic residues) spans 371–380 (TEKGSDHCSE). Residues 371–392 (TEKGSDHCSETTRSGSPVVTVN) are disordered. Residues 381 to 392 (TTRSGSPVVTVN) show a composition bias toward polar residues.

Belongs to the IspG family. It depends on [4Fe-4S] cluster as a cofactor.

The enzyme catalyses (2E)-4-hydroxy-3-methylbut-2-enyl diphosphate + oxidized [flavodoxin] + H2O + 2 H(+) = 2-C-methyl-D-erythritol 2,4-cyclic diphosphate + reduced [flavodoxin]. The protein operates within isoprenoid biosynthesis; isopentenyl diphosphate biosynthesis via DXP pathway; isopentenyl diphosphate from 1-deoxy-D-xylulose 5-phosphate: step 5/6. In terms of biological role, converts 2C-methyl-D-erythritol 2,4-cyclodiphosphate (ME-2,4cPP) into 1-hydroxy-2-methyl-2-(E)-butenyl 4-diphosphate. The sequence is that of 4-hydroxy-3-methylbut-2-en-1-yl diphosphate synthase (flavodoxin) from Mycobacterium leprae (strain Br4923).